Reading from the N-terminus, the 570-residue chain is Chaperonin GroEL 1 (570 aa).

Residues 42-45 (TLGP), lysine 63, 99-103 (DGTTT), glycine 427, and aspartate 507 contribute to the ATP site. The interval 537 to 570 (EDEDDDDGGGGGGGGMPAGGAGGMGGMGGMGGMM) is disordered. The segment covering 545–570 (GGGGGGGMPAGGAGGMGGMGGMGGMM) has biased composition (gly residues).

It belongs to the chaperonin (HSP60) family. Forms a cylinder of 14 subunits composed of two heptameric rings stacked back-to-back. Interacts with the co-chaperonin GroES.

It localises to the cytoplasm. It carries out the reaction ATP + H2O + a folded polypeptide = ADP + phosphate + an unfolded polypeptide.. Functionally, together with its co-chaperonin GroES, plays an essential role in assisting protein folding. The GroEL-GroES system forms a nano-cage that allows encapsulation of the non-native substrate proteins and provides a physical environment optimized to promote and accelerate protein folding. The chain is Chaperonin GroEL 1 from Salinibacter ruber (strain DSM 13855 / M31).